The primary structure comprises 273 residues: Bis(5'-nucleosyl)-tetraphosphatase, symmetrical (273 aa).

This sequence belongs to the Ap4A hydrolase family.

The enzyme catalyses P(1),P(4)-bis(5'-adenosyl) tetraphosphate + H2O = 2 ADP + 2 H(+). Its function is as follows. Hydrolyzes diadenosine 5',5'''-P1,P4-tetraphosphate to yield ADP. This Aliivibrio salmonicida (strain LFI1238) (Vibrio salmonicida (strain LFI1238)) protein is Bis(5'-nucleosyl)-tetraphosphatase, symmetrical.